The following is a 211-amino-acid chain: tRNA (guanine-N(7)-)-methyltransferase (211 aa).

S-adenosyl-L-methionine contacts are provided by E44, D69, D96, and D118. D118 is an active-site residue. Residue K122 coordinates substrate. Residues 124–129 (KHEKRR) are interaction with RNA. Residues D154 and 191 to 194 (TEYE) each bind substrate.

The protein belongs to the class I-like SAM-binding methyltransferase superfamily. TrmB family.

The catalysed reaction is guanosine(46) in tRNA + S-adenosyl-L-methionine = N(7)-methylguanosine(46) in tRNA + S-adenosyl-L-homocysteine. It functions in the pathway tRNA modification; N(7)-methylguanine-tRNA biosynthesis. Functionally, catalyzes the formation of N(7)-methylguanine at position 46 (m7G46) in tRNA. In Streptococcus pyogenes serotype M18 (strain MGAS8232), this protein is tRNA (guanine-N(7)-)-methyltransferase.